We begin with the raw amino-acid sequence, 58 residues long: Large ribosomal subunit protein uL30 (58 aa).

This sequence belongs to the universal ribosomal protein uL30 family. As to quaternary structure, part of the 50S ribosomal subunit.

This chain is Large ribosomal subunit protein uL30, found in Wigglesworthia glossinidia brevipalpis.